A 146-amino-acid polypeptide reads, in one-letter code: Prefoldin subunit alpha (146 aa).

Belongs to the prefoldin alpha subunit family. In terms of assembly, heterohexamer of two alpha and four beta subunits.

Its subcellular location is the cytoplasm. Its function is as follows. Molecular chaperone capable of stabilizing a range of proteins. Seems to fulfill an ATP-independent, HSP70-like function in archaeal de novo protein folding. The chain is Prefoldin subunit alpha from Methanobrevibacter smithii (strain ATCC 35061 / DSM 861 / OCM 144 / PS).